Reading from the N-terminus, the 29-residue chain is LICYNDHGYTGKTTETCENGETTCYEKSR.

Cysteines 3 and 24 form a disulfide.

As to expression, expressed by the venom gland.

Its subcellular location is the secreted. Binds to muscle nicotinic acetylcholine receptor (nAChR) and inhibit acetylcholine from binding to the receptor, thereby impairing neuromuscular transmission. This is Frontoxin VI from Micrurus frontalis (Coral snake).